The chain runs to 363 residues: Chorismate synthase (363 aa).

Residues arginine 48 and arginine 54 each coordinate NADP(+). FMN is bound by residues 125–127, 237–238, glycine 277, 292–296, and arginine 318; these read RSS, NA, and KPTSS.

This sequence belongs to the chorismate synthase family. Homotetramer. It depends on FMNH2 as a cofactor.

It carries out the reaction 5-O-(1-carboxyvinyl)-3-phosphoshikimate = chorismate + phosphate. The protein operates within metabolic intermediate biosynthesis; chorismate biosynthesis; chorismate from D-erythrose 4-phosphate and phosphoenolpyruvate: step 7/7. Functionally, catalyzes the anti-1,4-elimination of the C-3 phosphate and the C-6 proR hydrogen from 5-enolpyruvylshikimate-3-phosphate (EPSP) to yield chorismate, which is the branch point compound that serves as the starting substrate for the three terminal pathways of aromatic amino acid biosynthesis. This reaction introduces a second double bond into the aromatic ring system. The chain is Chorismate synthase from Ectopseudomonas mendocina (strain ymp) (Pseudomonas mendocina).